The primary structure comprises 252 residues: Demethylmenaquinone methyltransferase (252 aa).

Residues Thr64, Asp85, and Asn112 to Ala113 contribute to the S-adenosyl-L-methionine site.

Belongs to the class I-like SAM-binding methyltransferase superfamily. MenG/UbiE family.

The enzyme catalyses a 2-demethylmenaquinol + S-adenosyl-L-methionine = a menaquinol + S-adenosyl-L-homocysteine + H(+). It participates in quinol/quinone metabolism; menaquinone biosynthesis; menaquinol from 1,4-dihydroxy-2-naphthoate: step 2/2. Functionally, methyltransferase required for the conversion of demethylmenaquinol (DMKH2) to menaquinol (MKH2). This chain is Demethylmenaquinone methyltransferase, found in Lactococcus lactis subsp. lactis (strain IL1403) (Streptococcus lactis).